Here is a 628-residue protein sequence, read N- to C-terminus: (+)-alpha-pinene synthase, chloroplastic (628 aa).

Residues 1–48 (MALVSAVPLNSKLCLRRTLFGFSHELKAIHSTVPNLGMCRGGKSIAPS) constitute a chloroplast transit peptide. The Mg(2+) site is built by aspartate 379, aspartate 383, and aspartate 531. Residues 379–383 (DDIYD) carry the DDXXD motif motif. Serine 539 contacts K(+).

It belongs to the terpene synthase family. Tpsd subfamily. Requires Mg(2+) as cofactor. Mn(2+) serves as cofactor. The cofactor is K(+).

It localises to the plastid. The protein resides in the chloroplast. It catalyses the reaction (2E)-geranyl diphosphate = (1R,5R)-alpha-pinene + diphosphate. The protein operates within terpene metabolism; oleoresin biosynthesis. Functionally, involved in defensive oleoresin formation in conifers in response to insect attack or other injury. Involved in monoterpene (C10) olefins biosynthesis. Produces mainly (+)-alpha-pinene (97%) with a small amount of (-)-alpha-pinene (3%). This is (+)-alpha-pinene synthase, chloroplastic (PT30) from Pinus taeda (Loblolly pine).